A 181-amino-acid chain; its full sequence is TATA-box-binding protein (181 aa).

2 tandem repeats follow at residues 7-83 and 98-173.

The protein belongs to the TBP family.

Its function is as follows. General factor that plays a role in the activation of archaeal genes transcribed by RNA polymerase. Binds specifically to the TATA box promoter element which lies close to the position of transcription initiation. The chain is TATA-box-binding protein from Methanococcus vannielii (strain ATCC 35089 / DSM 1224 / JCM 13029 / OCM 148 / SB).